The primary structure comprises 780 residues: APC membrane recruitment protein 3 (780 aa).

The segment covering 20–32 has biased composition (basic and acidic residues); the sequence is KLIDSPAKEDPDK. Disordered stretches follow at residues 20–59, 341–407, 547–569, 582–617, 635–659, 706–729, and 749–780; these read KLID…QGYG, ELPL…FPRD, KGRE…AHSG, GEPA…TMTS, KELG…GSAL, KNPI…SPQD, and LGPQ…SVGS. Positions 354 to 376 are enriched in polar residues; sequence SKASSIDTGTPKSEQPESVSTSD. A compositionally biased stretch (polar residues) spans 602–617; sequence QDFSEGQSSSEATMTS. Over residues 753 to 763 the composition is skewed to polar residues; it reads ACSSVDSQPQQ.

It belongs to the Amer family.

The protein resides in the cell membrane. Functionally, regulator of the canonical Wnt signaling pathway. Acts by specifically binding phosphatidylinositol 4,5-bisphosphate (PtdIns(4,5)P2), translocating to the cell membrane. This is APC membrane recruitment protein 3 (Amer3) from Mus musculus (Mouse).